Here is a 215-residue protein sequence, read N- to C-terminus: Ribonuclease T (215 aa).

The Exonuclease domain maps to 20–194 (VVIDVETAGF…YDTLQTAKLF (175 aa)). Mg(2+) is bound by residues Asp-23, Glu-25, His-181, and Asp-186. Residue His-181 is the Proton donor/acceptor of the active site.

It belongs to the RNase T family. Homodimer. Mg(2+) serves as cofactor.

Trims short 3' overhangs of a variety of RNA species, leaving a one or two nucleotide 3' overhang. Responsible for the end-turnover of tRNA: specifically removes the terminal AMP residue from uncharged tRNA (tRNA-C-C-A). Also appears to be involved in tRNA biosynthesis. This chain is Ribonuclease T, found in Yersinia pseudotuberculosis serotype I (strain IP32953).